The sequence spans 304 residues: Acetyl-coenzyme A carboxylase carboxyl transferase subunit beta (304 aa).

The CoA carboxyltransferase N-terminal domain maps to 29–298 (LWTKCVSCAA…QAYRPSPQAS (270 aa)). Positions 33, 36, 52, and 55 each coordinate Zn(2+). The segment at 33 to 55 (CVSCAALHYTKDFQLNLCVCPAC) adopts a C4-type zinc-finger fold.

Belongs to the AccD/PCCB family. In terms of assembly, acetyl-CoA carboxylase is a heterohexamer composed of biotin carboxyl carrier protein (AccB), biotin carboxylase (AccC) and two subunits each of ACCase subunit alpha (AccA) and ACCase subunit beta (AccD). It depends on Zn(2+) as a cofactor.

Its subcellular location is the cytoplasm. The catalysed reaction is N(6)-carboxybiotinyl-L-lysyl-[protein] + acetyl-CoA = N(6)-biotinyl-L-lysyl-[protein] + malonyl-CoA. It participates in lipid metabolism; malonyl-CoA biosynthesis; malonyl-CoA from acetyl-CoA: step 1/1. Functionally, component of the acetyl coenzyme A carboxylase (ACC) complex. Biotin carboxylase (BC) catalyzes the carboxylation of biotin on its carrier protein (BCCP) and then the CO(2) group is transferred by the transcarboxylase to acetyl-CoA to form malonyl-CoA. This Gloeobacter violaceus (strain ATCC 29082 / PCC 7421) protein is Acetyl-coenzyme A carboxylase carboxyl transferase subunit beta.